Here is a 230-residue protein sequence, read N- to C-terminus: 5'-methylthioadenosine/S-adenosylhomocysteine nucleosidase (230 aa).

Glu12 functions as the Proton acceptor in the catalytic mechanism. Substrate-binding positions include Gly78, Ile153, and 174 to 175 (ME). Asp198 acts as the Proton donor in catalysis.

The protein belongs to the PNP/UDP phosphorylase family. MtnN subfamily.

It carries out the reaction S-adenosyl-L-homocysteine + H2O = S-(5-deoxy-D-ribos-5-yl)-L-homocysteine + adenine. The enzyme catalyses S-methyl-5'-thioadenosine + H2O = 5-(methylsulfanyl)-D-ribose + adenine. The catalysed reaction is 5'-deoxyadenosine + H2O = 5-deoxy-D-ribose + adenine. It functions in the pathway amino-acid biosynthesis; L-methionine biosynthesis via salvage pathway; S-methyl-5-thio-alpha-D-ribose 1-phosphate from S-methyl-5'-thioadenosine (hydrolase route): step 1/2. In terms of biological role, catalyzes the irreversible cleavage of the glycosidic bond in both 5'-methylthioadenosine (MTA) and S-adenosylhomocysteine (SAH/AdoHcy) to adenine and the corresponding thioribose, 5'-methylthioribose and S-ribosylhomocysteine, respectively. Also cleaves 5'-deoxyadenosine, a toxic by-product of radical S-adenosylmethionine (SAM) enzymes, into 5-deoxyribose and adenine. The sequence is that of 5'-methylthioadenosine/S-adenosylhomocysteine nucleosidase from Shewanella halifaxensis (strain HAW-EB4).